The chain runs to 557 residues: Mercuric reductase (557 aa).

The HMA domain occupies 1-65; sequence MILLSIEGMT…AIEALGYIAK (65 aa). A metal cation is bound by residues Cys11 and Cys14. Ala106 and Ala126 together coordinate FAD. A disulfide bond links Cys133 and Cys138. Residues Lys142, Ala207, Asp399, and Val407 each coordinate FAD. Residues Cys554 and Cys555 each contribute to the Hg(2+) site.

It belongs to the class-I pyridine nucleotide-disulfide oxidoreductase family. As to quaternary structure, homodimer. Requires FAD as cofactor.

It catalyses the reaction Hg + NADP(+) + H(+) = Hg(2+) + NADPH. Functionally, resistance to Hg(2+) in bacteria appears to be governed by a specialized system which includes mercuric reductase. MerA protein is responsible for volatilizing mercury as Hg(0). This Shewanella putrefaciens (Pseudomonas putrefaciens) protein is Mercuric reductase (merA).